The primary structure comprises 147 residues: MAPKKKVTGLIKLQIEAGAANPAPPVGPALGAHGVNIMEFCKAYNAATESQRGNVVPVEITVYEDRSFDFKLKTPPAAKLLLKAAGIKKGSGVPHTDKVGSVTWDQCKEIAQTKFEDLNARDIENGARIIAGTARSMGITVDGVPAK.

This sequence belongs to the universal ribosomal protein uL11 family. In terms of assembly, part of the ribosomal stalk of the 50S ribosomal subunit. Interacts with L10 and the large rRNA to form the base of the stalk. L10 forms an elongated spine to which L12 dimers bind in a sequential fashion forming a multimeric L10(L12)X complex. One or more lysine residues are methylated.

In terms of biological role, forms part of the ribosomal stalk which helps the ribosome interact with GTP-bound translation factors. The sequence is that of Large ribosomal subunit protein uL11 from Corynebacterium aurimucosum (strain ATCC 700975 / DSM 44827 / CIP 107346 / CN-1) (Corynebacterium nigricans).